A 61-amino-acid polypeptide reads, in one-letter code: Metallothionein (61 aa).

Position 1 is an N-acetylmethionine (M1). Residues 1–29 are beta; it reads MDPNCSCAAGGSCTCAGSCKCKECKCTSC. 20 residues coordinate a divalent metal cation: C5, C7, C13, C15, C19, C21, C24, C26, C29, C33, C34, C36, C37, C41, C44, C48, C50, C57, C59, and C60. The tract at residues 30–61 is alpha; that stretch reads KKSCCSCCPPGCTKCAQGCVCKGASDKCNCCA.

This sequence belongs to the metallothionein superfamily. Type 1 family. Monomer.

Its function is as follows. Metallothioneins have a high content of cysteine residues that bind various heavy metals. The chain is Metallothionein from Balaena mysticetus (Bowhead whale).